The primary structure comprises 503 residues: ATP synthase subunit alpha (503 aa).

ATP is bound at residue 169–176; that stretch reads GDRKTGKT.

It belongs to the ATPase alpha/beta chains family. F-type ATPases have 2 components, CF(1) - the catalytic core - and CF(0) - the membrane proton channel. CF(1) has five subunits: alpha(3), beta(3), gamma(1), delta(1), epsilon(1). CF(0) has three main subunits: a(1), b(2) and c(9-12). The alpha and beta chains form an alternating ring which encloses part of the gamma chain. CF(1) is attached to CF(0) by a central stalk formed by the gamma and epsilon chains, while a peripheral stalk is formed by the delta and b chains.

It is found in the cell membrane. The catalysed reaction is ATP + H2O + 4 H(+)(in) = ADP + phosphate + 5 H(+)(out). With respect to regulation, increases 2-fold following exposure to low pH. Functionally, produces ATP from ADP in the presence of a proton gradient across the membrane. The alpha chain is a regulatory subunit. The polypeptide is ATP synthase subunit alpha (Lactobacillus acidophilus (strain ATCC 700396 / NCK56 / N2 / NCFM)).